A 101-amino-acid polypeptide reads, in one-letter code: Replication restart protein PriB (101 aa).

The SSB domain occupies 1 to 101 (MATNHLVLSG…LHAENVELKT (101 aa)).

The protein belongs to the PriB family. In terms of assembly, homodimer. Interacts with PriA and DnaT. Component of the replication restart primosome. Primosome assembly occurs via a 'hand-off' mechanism. PriA binds to replication forks, subsequently PriB then DnaT bind; DnaT then displaces ssDNA to generate the helicase loading substrate.

Involved in the restart of stalled replication forks, which reloads the replicative helicase on sites other than the origin of replication; the PriA-PriB pathway is the major replication restart pathway. During primosome assembly it facilitates complex formation between PriA and DnaT on DNA; stabilizes PriA on DNA. Stimulates the DNA unwinding activity of PriA helicase. In Shewanella woodyi (strain ATCC 51908 / MS32), this protein is Replication restart protein PriB.